Consider the following 402-residue polypeptide: Elongation factor Tu (402 aa).

Residues 16–211 (KEHINIGTIG…AVDSYIDSPV (196 aa)) form the tr-type G domain. The G1 stretch occupies residues 25–32 (GHVDHGKT). 25 to 32 (GHVDHGKT) is a GTP binding site. A Mg(2+)-binding site is contributed by Thr-32. Residues 66–70 (GITIN) form a G2 region. The tract at residues 87-90 (DCPG) is G3. GTP-binding positions include 87-91 (DCPGH) and 142-145 (NKID). Residues 142 to 145 (NKID) form a G4 region. Positions 181–183 (SAR) are G5.

The protein belongs to the TRAFAC class translation factor GTPase superfamily. Classic translation factor GTPase family. EF-Tu/EF-1A subfamily. As to quaternary structure, monomer.

It localises to the cytoplasm. The enzyme catalyses GTP + H2O = GDP + phosphate + H(+). Its function is as follows. GTP hydrolase that promotes the GTP-dependent binding of aminoacyl-tRNA to the A-site of ribosomes during protein biosynthesis. This chain is Elongation factor Tu, found in Mesomycoplasma hyopneumoniae (strain 232) (Mycoplasma hyopneumoniae).